A 201-amino-acid chain; its full sequence is Holliday junction branch migration complex subunit RuvA (201 aa).

The tract at residues 1 to 63 is domain I; it reads MYDYIKGTVT…EDNISLFGFQ (63 aa). Positions 64-142 are domain II; it reads TTEERYLFKK…DVVASEIVYV (79 aa). Residues 143 to 153 form a flexible linker region; that stretch reads APENDMVAGLS. Positions 153–201 are domain III; the sequence is SPQLEEAVLALEALGYSTRELKKVIPKLAKEEDLTSDAYIKLALQLMTK.

The protein belongs to the RuvA family. As to quaternary structure, homotetramer. Forms an RuvA(8)-RuvB(12)-Holliday junction (HJ) complex. HJ DNA is sandwiched between 2 RuvA tetramers; dsDNA enters through RuvA and exits via RuvB. An RuvB hexamer assembles on each DNA strand where it exits the tetramer. Each RuvB hexamer is contacted by two RuvA subunits (via domain III) on 2 adjacent RuvB subunits; this complex drives branch migration. In the full resolvosome a probable DNA-RuvA(4)-RuvB(12)-RuvC(2) complex forms which resolves the HJ.

It localises to the cytoplasm. In terms of biological role, the RuvA-RuvB-RuvC complex processes Holliday junction (HJ) DNA during genetic recombination and DNA repair, while the RuvA-RuvB complex plays an important role in the rescue of blocked DNA replication forks via replication fork reversal (RFR). RuvA specifically binds to HJ cruciform DNA, conferring on it an open structure. The RuvB hexamer acts as an ATP-dependent pump, pulling dsDNA into and through the RuvAB complex. HJ branch migration allows RuvC to scan DNA until it finds its consensus sequence, where it cleaves and resolves the cruciform DNA. The sequence is that of Holliday junction branch migration complex subunit RuvA from Listeria monocytogenes serotype 4a (strain HCC23).